We begin with the raw amino-acid sequence, 578 residues long: Suppressor of smlA (578 aa).

Its function is as follows. Involved in regulation of group size of aggregation streams. This Dictyostelium discoideum (Social amoeba) protein is Suppressor of smlA (sslA1).